A 444-amino-acid polypeptide reads, in one-letter code: Glutamyl-tRNA reductase (444 aa).

Residues 49–52 (TCNR), Ser-109, 114–116 (ETQ), and Gln-120 contribute to the substrate site. Cys-50 serves as the catalytic Nucleophile. 189–194 (GAGKMG) lines the NADP(+) pocket.

Belongs to the glutamyl-tRNA reductase family. In terms of assembly, homodimer.

The catalysed reaction is (S)-4-amino-5-oxopentanoate + tRNA(Glu) + NADP(+) = L-glutamyl-tRNA(Glu) + NADPH + H(+). The protein operates within porphyrin-containing compound metabolism; protoporphyrin-IX biosynthesis; 5-aminolevulinate from L-glutamyl-tRNA(Glu): step 1/2. Functionally, catalyzes the NADPH-dependent reduction of glutamyl-tRNA(Glu) to glutamate 1-semialdehyde (GSA). The polypeptide is Glutamyl-tRNA reductase (Bacillus cereus (strain 03BB102)).